A 131-amino-acid polypeptide reads, in one-letter code: MNLEVKCPILGFEDTKNMNFYKIDEVFYRLKSLDGKDFSFVMIDPYMIRPDYDFEVPDYYQELLALNEQTNFGVFVIVAINEPLEESTVNFLAPVVMNYDNNSLVQVILDTSKYPNYFQSEKISAFIKQTK.

The protein belongs to the FliW family. As to quaternary structure, interacts with translational regulator CsrA and flagellin(s).

Its subcellular location is the cytoplasm. In terms of biological role, acts as an anti-CsrA protein, binds CsrA and prevents it from repressing translation of its target genes, one of which is flagellin. Binds to flagellin and participates in the assembly of the flagellum. This Campylobacter lari (strain RM2100 / D67 / ATCC BAA-1060) protein is Flagellar assembly factor FliW.